Here is a 121-residue protein sequence, read N- to C-terminus: UPF0738 protein BLi01253/BL05110 (121 aa).

Belongs to the UPF0738 family.

This chain is UPF0738 protein BLi01253/BL05110, found in Bacillus licheniformis (strain ATCC 14580 / DSM 13 / JCM 2505 / CCUG 7422 / NBRC 12200 / NCIMB 9375 / NCTC 10341 / NRRL NRS-1264 / Gibson 46).